The chain runs to 236 residues: Purine nucleoside phosphorylase DeoD-type 2 (236 aa).

His5 is an a purine D-ribonucleoside binding site. Phosphate contacts are provided by residues Gly21, Arg25, Arg44, and 88–91; that span reads RVGS. A purine D-ribonucleoside contacts are provided by residues 180–182 and 204–205; these read DME and SD. Asp205 serves as the catalytic Proton donor.

The protein belongs to the PNP/UDP phosphorylase family. As to quaternary structure, homohexamer; trimer of homodimers.

The enzyme catalyses a purine D-ribonucleoside + phosphate = a purine nucleobase + alpha-D-ribose 1-phosphate. It catalyses the reaction a purine 2'-deoxy-D-ribonucleoside + phosphate = a purine nucleobase + 2-deoxy-alpha-D-ribose 1-phosphate. Catalyzes the reversible phosphorolytic breakdown of the N-glycosidic bond in the beta-(deoxy)ribonucleoside molecules, with the formation of the corresponding free purine bases and pentose-1-phosphate. The chain is Purine nucleoside phosphorylase DeoD-type 2 from Photobacterium profundum (strain SS9).